A 487-amino-acid chain; its full sequence is NADH-quinone oxidoreductase subunit N (487 aa).

Helical transmembrane passes span 12 to 32 (VLIL…LIGV), 40 to 60 (LTVT…IVLF), 79 to 99 (YMKI…VGFS), 104 to 124 (FDIF…MLMI), 129 to 149 (MLSL…LAAI), 164 to 184 (FVLG…LYGF), 201 to 221 (ILHL…AFKI), 248 to 268 (APKI…FIPL), 281 to 301 (ILIF…IGQT), 310 to 330 (SSIG…ILGV), 332 to 352 (GILI…AFIL), 378 to 398 (AIVM…AGFF), 411 to 431 (GLVP…FYYL), and 455 to 475 (LCLC…FWFS).

Belongs to the complex I subunit 2 family. In terms of assembly, NDH-1 is composed of 14 different subunits. Subunits NuoA, H, J, K, L, M, N constitute the membrane sector of the complex.

The protein resides in the cell inner membrane. The enzyme catalyses a quinone + NADH + 5 H(+)(in) = a quinol + NAD(+) + 4 H(+)(out). Functionally, NDH-1 shuttles electrons from NADH, via FMN and iron-sulfur (Fe-S) centers, to quinones in the respiratory chain. The immediate electron acceptor for the enzyme in this species is believed to be ubiquinone. Couples the redox reaction to proton translocation (for every two electrons transferred, four hydrogen ions are translocated across the cytoplasmic membrane), and thus conserves the redox energy in a proton gradient. This chain is NADH-quinone oxidoreductase subunit N, found in Bartonella bacilliformis (strain ATCC 35685 / KC583 / Herrer 020/F12,63).